Here is a 304-residue protein sequence, read N- to C-terminus: Proline dehydrogenase 2 (304 aa).

Lys97 is a binding site for substrate. Asp131 is a catalytic residue. FAD contacts are provided by Met132 and Gln160. Residue Arg181 is part of the active site. FAD contacts are provided by residues 184–186 (KGA) and 223–224 (TH). 285-286 (RR) lines the substrate pocket.

Belongs to the proline dehydrogenase family. FAD is required as a cofactor.

It catalyses the reaction L-proline + a quinone = (S)-1-pyrroline-5-carboxylate + a quinol + H(+). The protein operates within amino-acid degradation; L-proline degradation into L-glutamate; L-glutamate from L-proline: step 1/2. Converts proline to delta-1-pyrroline-5-carboxylate. The protein is Proline dehydrogenase 2 of Bacillus subtilis subsp. natto.